Consider the following 371-residue polypeptide: ATP-dependent protease ATP-binding subunit-like protein AmiB (371 aa).

96-103 (GPTGVGKT) is a binding site for ATP.

This sequence belongs to the ClpX chaperone family. Mg(2+) serves as cofactor.

Functionally, unlikely to encode a regulatory protein. Has ATPase activity. AmiB and AmiS may act jointly into a two component ABC transporter system. This Pseudomonas aeruginosa (strain ATCC 15692 / DSM 22644 / CIP 104116 / JCM 14847 / LMG 12228 / 1C / PRS 101 / PAO1) protein is ATP-dependent protease ATP-binding subunit-like protein AmiB (amiB).